Here is a 518-residue protein sequence, read N- to C-terminus: OTU domain-containing protein 5 (518 aa).

Disordered regions lie at residues 1–79 (MTIL…SGGA) and 105–144 (PGHSKRRRQGVSAGPGAPGSSPDREDGAGNNSEDEYETAA). Over residues 39 to 53 (SSPPPRWAYPGNPAP) the composition is skewed to pro residues. Residues 116–125 (SAGPGAPGSS) show a composition bias toward low complexity. Residues 171–294 (FIIKQMKEDG…NIHYNSVVNP (124 aa)) enclose the OTU domain. The tract at residues 176 to 182 (MKEDGAC) is cys-loop. The active site involves D179. Residue C182 is the Nucleophile of the active site. The variable-loop stretch occupies residues 231-241 (KRKNNCHGNHI). Residues 282 to 287 (YHRNIH) are his-loop. Residue H287 is part of the active site. The disordered stretch occupies residues 371–450 (ARQPRKASAT…GPSNQTCAGA (80 aa)). Residues 377-390 (ASATCSSATAAASS) show a composition bias toward low complexity.

This sequence belongs to the peptidase C85 family.

It carries out the reaction Thiol-dependent hydrolysis of ester, thioester, amide, peptide and isopeptide bonds formed by the C-terminal Gly of ubiquitin (a 76-residue protein attached to proteins as an intracellular targeting signal).. Its function is as follows. Deubiquitinating enzyme that may function as negative regulator of the innate immune system. Has peptidase activity towards 'Lys-48'- and 'Lys-63'-linked polyubiquitin chains. Can also cleave 'Lys-11'-linked ubiquitin chains (in vitro). The sequence is that of OTU domain-containing protein 5 (otud5) from Xenopus tropicalis (Western clawed frog).